A 102-amino-acid polypeptide reads, in one-letter code: Large ribosomal subunit protein bL21 (102 aa).

The protein belongs to the bacterial ribosomal protein bL21 family. As to quaternary structure, part of the 50S ribosomal subunit. Contacts protein L20.

Functionally, this protein binds to 23S rRNA in the presence of protein L20. The sequence is that of Large ribosomal subunit protein bL21 from Bacillus anthracis (strain A0248).